The primary structure comprises 217 residues: Adenylate kinase (217 aa).

ATP is bound at residue 11 to 16; that stretch reads GAGKGT. Positions 31–60 are NMP; that stretch reads STGDMFREAMANETPVGLEAKSYIDKGNLV. Residues threonine 32, arginine 37, 58 to 60, 86 to 89, and glutamine 93 each bind AMP; these read NLV and GFPR. Positions 127 to 165 are LID; it reads ARYICKKCGATYNKISNPTKVEGTCDRCGGHEFFQREDD. Residue arginine 128 coordinates ATP. Zn(2+)-binding residues include cysteine 131 and cysteine 134. 137-138 contacts ATP; the sequence is TY. Zn(2+) contacts are provided by cysteine 151 and cysteine 154. 2 residues coordinate AMP: arginine 162 and arginine 173. Glutamine 201 is an ATP binding site.

The protein belongs to the adenylate kinase family. In terms of assembly, monomer.

The protein localises to the cytoplasm. The enzyme catalyses AMP + ATP = 2 ADP. Its pathway is purine metabolism; AMP biosynthesis via salvage pathway; AMP from ADP: step 1/1. Functionally, catalyzes the reversible transfer of the terminal phosphate group between ATP and AMP. Plays an important role in cellular energy homeostasis and in adenine nucleotide metabolism. The sequence is that of Adenylate kinase from Lactobacillus johnsonii (strain CNCM I-12250 / La1 / NCC 533).